The following is a 172-amino-acid chain: Cytidylate kinase (172 aa).

Residue glycine 7–threonine 15 coordinates ATP.

Belongs to the cytidylate kinase family. Type 2 subfamily.

The protein localises to the cytoplasm. It carries out the reaction CMP + ATP = CDP + ADP. It catalyses the reaction dCMP + ATP = dCDP + ADP. The sequence is that of Cytidylate kinase from Methanobrevibacter smithii (strain ATCC 35061 / DSM 861 / OCM 144 / PS).